The chain runs to 424 residues: Zinc finger protein 597 (424 aa).

One can recognise a KRAB domain in the interval 14–88 (ILFEDLAVYF…KYPIAAPLVP (75 aa)). 4 C2H2-type zinc fingers span residues 156–178 (YKCP…QKIH), 184–206 (HKCG…RRIH), 212–234 (YKCA…MNSH), and 240–262 (YTCS…QKSH). Residue Lys-300 forms a Glycyl lysine isopeptide (Lys-Gly) (interchain with G-Cter in SUMO2) linkage. C2H2-type zinc fingers lie at residues 341–363 (LQCP…QNIH), 369–391 (HKCK…QKSH), and 397–419 (FKCT…KRTH).

The protein belongs to the krueppel C2H2-type zinc-finger protein family.

The protein resides in the nucleus. Functionally, may be involved in transcriptional regulation. The polypeptide is Zinc finger protein 597 (ZNF597) (Homo sapiens (Human)).